The chain runs to 631 residues: ESX-3 secretion system protein EccA3 (631 aa).

385 to 392 contacts ATP; sequence GPPGTGKT.

Belongs to the CbxX/CfxQ family. Part of the ESX-3 / type VII secretion system (T7SS), which is composed of cytosolic and membrane components.

The protein localises to the cytoplasm. Functionally, part of the ESX-3 specialized secretion system, which is important for iron and zinc uptake or homeostasis. EccA3 exhibits ATPase activity and may provide energy for the export of ESX-3 substrates. The polypeptide is ESX-3 secretion system protein EccA3 (Mycobacterium tuberculosis (strain CDC 1551 / Oshkosh)).